A 323-amino-acid polypeptide reads, in one-letter code: MKWKKYTIETTTAAEDFMSSMLMELGIEGIEIEDNIPLTKEDQADMFIDFLPELPPDEGISHVSFYIEDDGSDQSDMLRKVKLGLEDLRDTVDVGSGVISSSETEDLDWINNWKKYFSSFTIGDILIKPTWEEVKPEDADKFMIEIDPGISFGTGKHETTQLCIKQLIKYIEGAKEAPTVLDVGCGSGILSIVALKLGAKEVVGTDLDADCMISTRDNMQVNHLDEKLGTFYVGNLIDDTELQKKVGTEKYDIVVANILADVIIPMAPVIPDRLKEGGYFITSGIIDFKENEVKEAIEAAGLKVIEINHQGEWVNITAQKLTK.

Positions 160, 184, 206, and 257 each coordinate S-adenosyl-L-methionine.

Belongs to the methyltransferase superfamily. PrmA family.

Its subcellular location is the cytoplasm. The enzyme catalyses L-lysyl-[protein] + 3 S-adenosyl-L-methionine = N(6),N(6),N(6)-trimethyl-L-lysyl-[protein] + 3 S-adenosyl-L-homocysteine + 3 H(+). Methylates ribosomal protein L11. This is Ribosomal protein L11 methyltransferase from Agathobacter rectalis (strain ATCC 33656 / DSM 3377 / JCM 17463 / KCTC 5835 / VPI 0990) (Eubacterium rectale).